Consider the following 786-residue polypeptide: Endonuclease MutS2 (786 aa).

332-339 (GPNTGGKT) is an ATP binding site. Positions 710-785 (VDLRGLDAEE…GDGVTMVELK (76 aa)) constitute a Smr domain.

This sequence belongs to the DNA mismatch repair MutS family. MutS2 subfamily. As to quaternary structure, homodimer. Binds to stalled ribosomes, contacting rRNA.

In terms of biological role, endonuclease that is involved in the suppression of homologous recombination and thus may have a key role in the control of bacterial genetic diversity. Functionally, acts as a ribosome collision sensor, splitting the ribosome into its 2 subunits. Detects stalled/collided 70S ribosomes which it binds and splits by an ATP-hydrolysis driven conformational change. Acts upstream of the ribosome quality control system (RQC), a ribosome-associated complex that mediates the extraction of incompletely synthesized nascent chains from stalled ribosomes and their subsequent degradation. Probably generates substrates for RQC. This is Endonuclease MutS2 from Clostridium beijerinckii (strain ATCC 51743 / NCIMB 8052) (Clostridium acetobutylicum).